The primary structure comprises 219 residues: Large ribosomal subunit protein eL13 (219 aa).

The tract at residues 198-219 (KDAAENPDDVTKAPTAVKRNKT) is disordered.

Belongs to the eukaryotic ribosomal protein eL13 family. As to quaternary structure, component of the 60S large ribosomal subunit (LSU).

The protein localises to the cytoplasm. Functionally, component of the ribosome, a large ribonucleoprotein complex responsible for the synthesis of proteins in the cell. The small ribosomal subunit (SSU) binds messenger RNAs (mRNAs) and translates the encoded message by selecting cognate aminoacyl-transfer RNA (tRNA) molecules. The large subunit (LSU) contains the ribosomal catalytic site termed the peptidyl transferase center (PTC), which catalyzes the formation of peptide bonds, thereby polymerizing the amino acids delivered by tRNAs into a polypeptide chain. The nascent polypeptides leave the ribosome through a tunnel in the LSU and interact with protein factors that function in enzymatic processing, targeting, and the membrane insertion of nascent chains at the exit of the ribosomal tunnel. As part of the LSU, it is probably required for its formation and the maturation of rRNAs. The polypeptide is Large ribosomal subunit protein eL13 (RpL13) (Spodoptera frugiperda (Fall armyworm)).